The sequence spans 270 residues: D-aminoacyl-tRNA deacylase (270 aa).

The protein belongs to the DtdA deacylase family. In terms of assembly, monomer. Zn(2+) serves as cofactor.

The enzyme catalyses a D-aminoacyl-tRNA + H2O = a tRNA + a D-alpha-amino acid + H(+). It catalyses the reaction glycyl-tRNA(Ala) + H2O = tRNA(Ala) + glycine + H(+). D-aminoacyl-tRNA deacylase with broad substrate specificity. By recycling D-aminoacyl-tRNA to D-amino acids and free tRNA molecules, this enzyme counteracts the toxicity associated with the formation of D-aminoacyl-tRNA entities in vivo. The sequence is that of D-aminoacyl-tRNA deacylase from Pyrococcus furiosus (strain ATCC 43587 / DSM 3638 / JCM 8422 / Vc1).